The chain runs to 438 residues: UDP-N-acetylmuramoylalanine--D-glutamate ligase (438 aa).

Position 112-118 (112-118) interacts with ATP; that stretch reads GSNGKST.

The protein belongs to the MurCDEF family.

It localises to the cytoplasm. The enzyme catalyses UDP-N-acetyl-alpha-D-muramoyl-L-alanine + D-glutamate + ATP = UDP-N-acetyl-alpha-D-muramoyl-L-alanyl-D-glutamate + ADP + phosphate + H(+). It functions in the pathway cell wall biogenesis; peptidoglycan biosynthesis. Functionally, cell wall formation. Catalyzes the addition of glutamate to the nucleotide precursor UDP-N-acetylmuramoyl-L-alanine (UMA). This Escherichia coli O6:K15:H31 (strain 536 / UPEC) protein is UDP-N-acetylmuramoylalanine--D-glutamate ligase.